A 188-amino-acid polypeptide reads, in one-letter code: Elongation factor P (188 aa).

The protein belongs to the elongation factor P family.

Its subcellular location is the cytoplasm. Its pathway is protein biosynthesis; polypeptide chain elongation. Involved in peptide bond synthesis. Stimulates efficient translation and peptide-bond synthesis on native or reconstituted 70S ribosomes in vitro. Probably functions indirectly by altering the affinity of the ribosome for aminoacyl-tRNA, thus increasing their reactivity as acceptors for peptidyl transferase. This is Elongation factor P from Rhodospirillum centenum (strain ATCC 51521 / SW).